The following is a 249-amino-acid chain: Syntaxin-10 (249 aa).

Ser2 is modified (N-acetylserine). The Cytoplasmic segment spans residues 2–228 (SLEDPFFVVR…VSHMTSDRRQ (227 aa)). The stretch at 41 to 69 (EELDWTTNELRNGLRSIEWDLEDLEETIG) forms a coiled coil. The residue at position 108 (Ser108) is a Phosphoserine. Thr110 carries the phosphothreonine modification. 3 positions are modified to phosphoserine: Ser134, Ser140, and Ser143. Residues 157 to 219 (QLIMDEQDQQ…DGVLRKLAKV (63 aa)) form the t-SNARE coiled-coil homology domain. The helical; Anchor for type IV membrane protein transmembrane segment at 229 to 249 (WCAIAVLVGVLLLVLILLFSL) threads the bilayer.

It belongs to the syntaxin family. Interacts with VPS52. In terms of tissue distribution, expressed at high levels in heart, skeletal muscle and pancreas.

It is found in the golgi apparatus membrane. In terms of biological role, SNARE involved in vesicular transport from the late endosomes to the trans-Golgi network. This Homo sapiens (Human) protein is Syntaxin-10 (STX10).